A 232-amino-acid chain; its full sequence is Ion-translocating oxidoreductase complex subunit E (232 aa).

Transmembrane regions (helical) follow at residues 18–38 (GLVQ…LTNA), 39–59 (IGLG…VSLV), 69–89 (IPVF…LINA), 93–113 (GLYL…VIIG), 127–147 (AAFD…LLGA), and 182–202 (NFLL…LIAI).

Belongs to the NqrDE/RnfAE family. In terms of assembly, the complex is composed of six subunits: RnfA, RnfB, RnfC, RnfD, RnfE and RnfG.

Its subcellular location is the cell inner membrane. Functionally, part of a membrane-bound complex that couples electron transfer with translocation of ions across the membrane. The polypeptide is Ion-translocating oxidoreductase complex subunit E (Shewanella loihica (strain ATCC BAA-1088 / PV-4)).